Consider the following 358-residue polypeptide: MQEWFQNLFAATLGLGDLGITVGLVVSVIVKIVIILIPLILTVAYLTYFERKVIGFMQLRVGPNVTGPWGLIQPFADVFKLLFKEVTRPRLSNKALFYIGPIMSLAPSFAAWAVIPFNEEWVLTNINIGLLYILMITSLSVYGVIIAGWASNSKYSFLGAMRASAQSISYEIAMSAALVCVVMVSGSMNFSDIVAAQAKGIAGGSVFSWNWLPLFPIFIVYLISAVAETNRAPFDVAEGESEIVAGHHVEYSGFAFALFFLAEYIFMILISALTSLMFLGGWLSPFPQSWGFIGTPSAFWMFVKMAAVLYWYLWIRATFPRYRYDQIMRLGWKVLIPIGFAYIVILGLWMISPLNLWK.

8 helical membrane-spanning segments follow: residues 20 to 40, 95 to 115, 128 to 148, 168 to 188, 206 to 226, 253 to 273, 290 to 310, and 334 to 354; these read ITVG…IPLI, ALFY…WAVI, IGLL…IIAG, ISYE…SGSM, VFSW…ISAV, GFAF…ISAL, WGFI…AVLY, and VLIP…ISPL.

The protein belongs to the complex I subunit 1 family. In terms of assembly, NDH-1 is composed of 14 different subunits. Subunits NuoA, H, J, K, L, M, N constitute the membrane sector of the complex.

The protein resides in the cell inner membrane. The enzyme catalyses a quinone + NADH + 5 H(+)(in) = a quinol + NAD(+) + 4 H(+)(out). Its function is as follows. NDH-1 shuttles electrons from NADH, via FMN and iron-sulfur (Fe-S) centers, to quinones in the respiratory chain. The immediate electron acceptor for the enzyme in this species is believed to be ubiquinone. Couples the redox reaction to proton translocation (for every two electrons transferred, four hydrogen ions are translocated across the cytoplasmic membrane), and thus conserves the redox energy in a proton gradient. This subunit may bind ubiquinone. The sequence is that of NADH-quinone oxidoreductase subunit H from Neisseria meningitidis serogroup A / serotype 4A (strain DSM 15465 / Z2491).